Here is a 297-residue protein sequence, read N- to C-terminus: NADH-ubiquinone oxidoreductase chain 1 (297 aa).

9 helical membrane-spanning segments follow: residues 1–21 (MKSLIVALAIVLAVAFMTLAE), 34–54 (PNHVGFLGLLQPFADGIKLIL), 66–86 (WLFVLAPFLSFYLALLNWLVI), 99–119 (LSILLILAISSLGVYAIIYTG), 139–159 (VSYEIAMSLLVLTVVYMGATL), 170–190 (GTVLLWSLWPMAMIGFVAALA), 206–228 (LVAGFMTEHSAISFTFLFLGEYA), 235–257 (TVLNLMFLGFYNPLVIYLFIWIR), and 277–297 (LPFLIGFLMIQPSTLFVLDLF).

This sequence belongs to the complex I subunit 1 family.

It localises to the mitochondrion inner membrane. It catalyses the reaction a ubiquinone + NADH + 5 H(+)(in) = a ubiquinol + NAD(+) + 4 H(+)(out). In terms of biological role, core subunit of the mitochondrial membrane respiratory chain NADH dehydrogenase (Complex I) that is believed to belong to the minimal assembly required for catalysis. Complex I functions in the transfer of electrons from NADH to the respiratory chain. The immediate electron acceptor for the enzyme is believed to be ubiquinone. This Hyaloraphidium curvatum (Lower fungus) protein is NADH-ubiquinone oxidoreductase chain 1.